Here is a 419-residue protein sequence, read N- to C-terminus: MARAKFERKKPHVNIGTIGHVDHGKTTLTAAITMALAARGGATGRKYDEIDSAPEEKARGITINAAHVEYETENRHYAHVDCPGHADYVKNMITGAAQMDGAILVVSGADGPMPQTTEHVLLAKQVGVPAIVVFLNKADQVDDPELLELVELEVRDILDKYGFASDEVQILSGSALLALEALVENPNIKPGDSEWVDKIYNLMATVDEHIPTPKREMDKPFLLAVEDVFSITGRGTVATGRVERGTLKVNETVEIIGLRDTKTTTVTAIEMFQKTLDETIAGDNVGILLRGVQKKDIERGMVIAKPGTILPHTLFEGQVYVLTAEEGGRKSGFFKGYQPQFYVRTTDVTGKILDFSYIKQRNPSELSTMHSNPMVCPGDYVNMKIQLITPIAIEKGMRFAIREGGRTVGAGMVLEILES.

Residues lysine 10–lysine 214 form the tr-type G domain. The G1 stretch occupies residues glycine 19–threonine 26. GTP is bound at residue glycine 19–threonine 26. Threonine 26 is a binding site for Mg(2+). Positions glycine 60 to asparagine 64 are G2. The G3 stretch occupies residues aspartate 81 to glycine 84. Residues aspartate 81–histidine 85 and asparagine 136–aspartate 139 contribute to the GTP site. The tract at residues asparagine 136–aspartate 139 is G4. The G5 stretch occupies residues serine 174–leucine 176.

This sequence belongs to the TRAFAC class translation factor GTPase superfamily. Classic translation factor GTPase family. EF-Tu/EF-1A subfamily.

It localises to the plastid. The protein localises to the chloroplast. It carries out the reaction GTP + H2O = GDP + phosphate + H(+). GTP hydrolase that promotes the GTP-dependent binding of aminoacyl-tRNA to the A-site of ribosomes during protein biosynthesis. The protein is Elongation factor Tu, chloroplastic (tufA) of Stigeoclonium helveticum (Green alga).